The primary structure comprises 653 residues: MLQARVQLKRGFVKATTTGVPGGEDVKKGPDTFKRSALLALGALGIVYGDIGTSPLYALRECFTGAHGIPPTPANVLGVLSLIFWSLIIVVSVKYLLLVMKADNRGEGGILAMMALVMQRQRAQPSHRSRPMLITLGIFGAALLYGDGIITPAITVLSAVEGLHVATAVFDPYVIPIALVILVALFLVQRHGTADIGAVFGPVMCIWFLTLAGLGVKELVHNPAVLGALSPWHAVELFRHNHLHGFLVLGGVFLVVTGCEALYADMGHFGRKPIQLAWFSMVLPALMLNYLGQGALLLRDASAARNPFFLLAPSWLLYPLVALATVAGVIASQALIAGVFSLTRQAMQLGYSPRMEVVHTSAEEMGQIYLPGLNWALLVGVVALVLGFRSSSALASAYGIAVSTAMVITTLMAYVVARELWGVRRWVAIPVVGLFLSVELAFFGANAVKVADGGWFPLLMAVVVFTLMTTWKRGRDILAAKLRASSIPLKVLLGSFGDHPPVRVPGTAIFMTGNAEGTPPALLHNLKHNKVLHEQVVLLTILSEELPHVPHSERVEVEPLEQGFVRVVARYGFMENPGIPDVLKRCREKGLQFQLMGTSFFLGRETLIPTKRPGMAVWREALFAWMSRNARSATAYFRIPPNRVVELGAQVEL.

The next 12 membrane-spanning stretches (helical) occupy residues 37 to 57 (ALLA…SPLY), 79 to 99 (VLSL…LLLV), 134 to 154 (ITLG…TPAI), 168 to 188 (AVFD…LFLV), 196 to 216 (IGAV…GLGV), 243 to 263 (LHGF…EALY), 278 to 298 (WFSM…ALLL), 320 to 340 (LVAL…AGVF), 368 to 388 (IYLP…VLGF), 397 to 417 (AYGI…YVVA), 426 to 446 (WVAI…FGAN), and 450 to 470 (VADG…LMTT).

This sequence belongs to the HAK/KUP transporter (TC 2.A.72) family.

Its subcellular location is the cell inner membrane. The catalysed reaction is K(+)(in) + H(+)(in) = K(+)(out) + H(+)(out). Its function is as follows. Transport of potassium into the cell. Likely operates as a K(+):H(+) symporter. This Myxococcus xanthus (strain DK1622) protein is Probable potassium transport system protein Kup.